Reading from the N-terminus, the 218-residue chain is UPF0329 protein ECU10_1860 (218 aa).

Belongs to the UPF0329 family.

The sequence is that of UPF0329 protein ECU10_1860 from Encephalitozoon cuniculi (strain GB-M1) (Microsporidian parasite).